We begin with the raw amino-acid sequence, 332 residues long: Glycerol-3-phosphate dehydrogenase [NAD(P)+] (332 aa).

NADPH is bound by residues serine 11, phenylalanine 12, lysine 32, and lysine 106. Residues lysine 106, glycine 137, and serine 139 each contribute to the sn-glycerol 3-phosphate site. Alanine 141 serves as a coordination point for NADPH. The sn-glycerol 3-phosphate site is built by lysine 192, aspartate 245, serine 255, arginine 256, and asparagine 257. The active-site Proton acceptor is the lysine 192. Arginine 256 contributes to the NADPH binding site. Residues valine 280 and glutamate 282 each contribute to the NADPH site.

Belongs to the NAD-dependent glycerol-3-phosphate dehydrogenase family.

It localises to the cytoplasm. It catalyses the reaction sn-glycerol 3-phosphate + NAD(+) = dihydroxyacetone phosphate + NADH + H(+). It carries out the reaction sn-glycerol 3-phosphate + NADP(+) = dihydroxyacetone phosphate + NADPH + H(+). The protein operates within membrane lipid metabolism; glycerophospholipid metabolism. In terms of biological role, catalyzes the reduction of the glycolytic intermediate dihydroxyacetone phosphate (DHAP) to sn-glycerol 3-phosphate (G3P), the key precursor for phospholipid synthesis. The sequence is that of Glycerol-3-phosphate dehydrogenase [NAD(P)+] from Staphylococcus saprophyticus subsp. saprophyticus (strain ATCC 15305 / DSM 20229 / NCIMB 8711 / NCTC 7292 / S-41).